Consider the following 715-residue polypeptide: MFNVVKKTFAYGDHQVTIETGEVARQAGGAVLVSMEETVVLVTVVAAKNAKPGQDFFPLTVDYQEKTYAAGRIPGGFFKREGRPSEKETLTCRLIDRPIRPLFPDGFYNEVQVIATVMSLNPEIDSDIPALIGASAALAISGVPFNGPIGAARVGYIDGQYVLCPTLSQLKGSQLDLVVAGTEAAVLMVESEADQLSEEVMLGAVVFGHTEMQKAINAINELVEEAGKPEWEWEAAPKDEALVASLSALVSAKLEEAYNITVKQTRSQAVKAIRAEAVAALCTGAEGAPDENTVGNLFHEIEASIVRGRILSGAPRIDGRDTRTVRPITMRSGVLPRTHGSALFTRGETQALAVATLGTNRDEQIIDALAGEYRDRFMLHYNMPPYATGECGRVGTPKRREIGHGRLAKRALLAVLPKPEDFSYSMRLVSEITESNGSSSMASVCGGCLALLDAGVPLKAHVAGIAMGLIKDGNRFAVLTDILGDEDHLGDMDFKVAGSTTGITALQMDIKIQGITKEIMQVALAQAKEARIHILNLMQESAAGPREEMSAYAPRLYTFKINPEKIRDVIGKGGAVIRALTEETGTTIDIQDDGTITIAATSGEAAAAARSRIDAITAEVEIGKIYEGTVLKILDFGAIVSVLPGKDGLLHISQIAQERVNKVEDYVKEGQIVRVKVLETDDRGRVKLSMKAAAADEGTVAQPVAAPEAAVQQQQ.

Asp-487 and Asp-493 together coordinate Mg(2+). Positions 554-613 constitute a KH domain; sequence PRLYTFKINPEKIRDVIGKGGAVIRALTEETGTTIDIQDDGTITIAATSGEAAAAARSRI. The S1 motif domain occupies 623–691; it reads GKIYEGTVLK…DRGRVKLSMK (69 aa).

This sequence belongs to the polyribonucleotide nucleotidyltransferase family. Requires Mg(2+) as cofactor.

The protein localises to the cytoplasm. The enzyme catalyses RNA(n+1) + phosphate = RNA(n) + a ribonucleoside 5'-diphosphate. Its function is as follows. Involved in mRNA degradation. Catalyzes the phosphorolysis of single-stranded polyribonucleotides processively in the 3'- to 5'-direction. The protein is Polyribonucleotide nucleotidyltransferase of Dechloromonas aromatica (strain RCB).